We begin with the raw amino-acid sequence, 3564 residues long: CUB and sushi domain-containing protein 1 (3564 aa).

A signal peptide spans 1–26 (MTAWRRFQSLLLLLGLLVLCARLLTA). Topologically, residues 27 to 3487 (AKGQNCGGLV…SHYHGTSSGS (3461 aa)) are extracellular. Cystine bridges form between C32–C58, C145–C185, C171–C202, C208–C234, C349–C389, C375–C406, C411–C437, C527–C567, C553–C580, and C584–C610. The region spanning 32 to 140 (CGGLVQGPNG…QGFKALYEVL (109 aa)) is the CUB 1 domain. N40 and N57 each carry an N-linked (GlcNAc...) asparagine glycan. One can recognise a Sushi 1 domain in the interval 143–204 (HTCGNPGEIL…WDFPAPFCRA (62 aa)). Positions 208–312 (CGGTLRGTSS…KGFNAQFQVK (105 aa)) constitute a CUB 2 domain. Residues 347 to 408 (DMCPDPGIPE…WSDHRPICRA (62 aa)) form the Sushi 2 domain. The 112-residue stretch at 411–522 (CGSNLRGPSG…PGFKAVYQEI (112 aa)) folds into the CUB 3 domain. The Sushi 3 domain maps to 525-582 (GGCGDPGIPAYGKRTGSSFLHGDTLTFECPAAFELVGERVITCQQNNQWSGNKPSCVF). Residues 584–692 (CFFNFTASSG…RGFNITYTTF (109 aa)) enclose the CUB 4 domain. N-linked (GlcNAc...) asparagine glycans are attached at residues N587 and N686. A Sushi 4 domain is found at 695 to 756 (NECHDPGIPI…WSSTVPRCEA (62 aa)). Cystine bridges form between C697–C738, C723–C754, C758–C784, C873–C913, C899–C926, and C930–C956. The 109-residue stretch at 758-866 (CGGHLTASSG…IGFLIHYESV (109 aa)) folds into the CUB 5 domain. The region spanning 871–928 (DSCLDPGIPVNGHRHGGDFGIRSTVTFSCDPGYTLSDDEPLVCERNHQWNHALPSCDA) is the Sushi 5 domain. The CUB 6 domain maps to 930 to 1040 (CGGYIQGKSG…EGFNITFSEY (111 aa)). N955, N1015, and N1034 each carry an N-linked (GlcNAc...) asparagine glycan. One can recognise a Sushi 6 domain in the interval 1043-1102 (EPCDDPGVPAFSRRIGFHFGVGDSLTFSCFLGYRLEGATKLTCLGGGRRVWSAPLPRCVA). 3 disulfide bridges follow: C1045-C1085, C1071-C1100, and C1104-C1130. Residues 1104–1212 (CGASVKGNEG…QGFQLTYTSF (109 aa)) form the CUB 7 domain. Residues N1184 and N1197 are each glycosylated (N-linked (GlcNAc...) asparagine). In terms of domain architecture, Sushi 7 spans 1215-1275 (VKCEDPGIPN…WDKPLPSCIA (61 aa)). 12 disulfides stabilise this stretch: C1217/C1258, C1244/C1273, C1277/C1304, C1391/C1431, C1417/C1447, C1451/C1477, C1564/C1604, C1590/C1621, C1625/C1651, C1741/C1781, C1767/C1798, and C1802/C1828. The CUB 8 domain occupies 1277–1386 (CGGQIHAATS…SGFSIQFSTS (110 aa)). A Sushi 8 domain is found at 1389–1449 (ATCNDPGMPQ…WQPDPPTCIA (61 aa)). N-linked (GlcNAc...) asparagine glycosylation occurs at N1399. One can recognise a CUB 9 domain in the interval 1451-1559 (CGGNLTGPAG…SGFAIEFKEK (109 aa)). Residues N1454 and N1572 are each glycosylated (N-linked (GlcNAc...) asparagine). In terms of domain architecture, Sushi 9 spans 1562–1623 (EACFDPGNIM…WDQVLPSCNA (62 aa)). Residues 1625–1733 (CGGQYTGSEG…RGFHFVYQAV (109 aa)) enclose the CUB 10 domain. A glycan (N-linked (GlcNAc...) asparagine) is linked at N1644. The Sushi 10 domain maps to 1739–1800 (TQCSSVPEPR…WNDTIPSCVV (62 aa)). 3 N-linked (GlcNAc...) asparagine glycosylation sites follow: N1792, N1805, and N1882. A CUB 11 domain is found at 1802-1910 (CSGNFTQRRG…AGFHLEYKTV (109 aa)). In terms of domain architecture, Sushi 11 spans 1913–1972 (AACQEPALPSNSIKIGDRYMVNDVLSFQCEPGYTLQGRSHISCMPGTVRRWNYPSPLCIA). Cystine bridges form between C1915–C1955, C1941–C1970, and C1974–C2000. Residues 1974-2082 (CGGTLSTLGG…QGFKLAYQAY (109 aa)) form the CUB 12 domain. The N-linked (GlcNAc...) asparagine glycan is linked to N2018. Residues 2085 to 2144 (QNCPDPPPFQNGYMINSDYSVGQSVSFECYPGYILIGHPVLTCQHGINRNWNYPFPRCDA) enclose the Sushi 12 domain. Cystine bridges form between C2087-C2127, C2113-C2142, and C2146-C2172. Residues 2146–2257 (CGYNVTSQNG…LNFHAFQLKK (112 aa)) form the CUB 13 domain. N-linked (GlcNAc...) asparagine glycans are attached at residues N2149, N2154, and N2187. One can recognise a Sushi 13 domain in the interval 2256–2317 (KKCQPPPAVP…FEGSLPTCEA (62 aa)). Intrachain disulfides connect C2258/C2300, C2286/C2315, and C2319/C2347. The region spanning 2319–2430 (CPANEVRTGS…KGFKIRYAAP (112 aa)) is the CUB 14 domain. Residues N2358, N2394, N2400, N2445, N2470, and N2503 are each glycosylated (N-linked (GlcNAc...) asparagine). Sushi domains are found at residues 2430-2492 (PYCS…LCQA), 2493-2554 (VSCG…TCKP), 2555-2619 (VACP…SCRV), 2620-2677 (ISCG…RCLA), 2678-2735 (GHCG…VCVP), 2736-2793 (ITCG…TCRV), 2794-2856 (VNCS…KCLA), 2857-2914 (ISCG…HCTG), 2918-2975 (GFCG…VCEA), 2976-3034 (VSCG…DCTI), 3035-3094 (ISCG…VCKA), 3095-3152 (VLCP…QCLP), 3153-3210 (VFCG…TCID), 3214-3272 (NTCP…ECIP), and 3273-3332 (HACR…VCKS). 12 disulfides stabilise this stretch: C2432-C2473, C2459-C2490, C2495-C2537, C2521-C2552, C2557-C2602, C2588-C2617, C2622-C2662, C2648-C2675, C2680-C2720, C2706-C2733, C2738-C2778, and C2764-C2791. N2605 carries N-linked (GlcNAc...) asparagine glycosylation. N-linked (GlcNAc...) asparagine glycosylation is found at N2750 and N2761. Residue N2795 is glycosylated (N-linked (GlcNAc...) asparagine). 18 cysteine pairs are disulfide-bonded: C2796/C2841, C2827/C2854, C2859/C2899, C2885/C2912, C2920/C2960, C2946/C2973, C2978/C3019, C3005/C3032, C3037/C3079, C3063/C3092, C3097/C3137, C3123/C3150, C3155/C3195, C3181/C3208, C3216/C3257, C3243/C3270, C3275/C3317, and C3302/C3330. N2894 carries N-linked (GlcNAc...) asparagine glycosylation. N-linked (GlcNAc...) asparagine glycosylation occurs at N2963. Residues N3022 and N3056 are each glycosylated (N-linked (GlcNAc...) asparagine). N3105 carries an N-linked (GlcNAc...) asparagine glycan. N3228 and N3260 each carry an N-linked (GlcNAc...) asparagine glycan. Residues N3339, N3379, and N3386 are each glycosylated (N-linked (GlcNAc...) asparagine). The helical transmembrane segment at 3488-3508 (VAAAILVPFFALILSGFAFYL) threads the bilayer. Topologically, residues 3509 to 3564 (YKHRTRPKVQYNGYAGHENSNGQASFENPMYDTNLKPTEAKAVRFDTTLNTVCTVV) are cytoplasmic.

The protein belongs to the CSMD family. In terms of tissue distribution, weakly expressed in most tissues, except in brain. Expressed at intermediate level in brain, including cerebellum, substantia nigra, hippocampus and fetal brain.

It localises to the membrane. In terms of biological role, potential suppressor of squamous cell carcinomas. The polypeptide is CUB and sushi domain-containing protein 1 (CSMD1) (Homo sapiens (Human)).